A 63-amino-acid chain; its full sequence is Protein BP4A (63 aa).

In terms of tissue distribution, pollen specific.

The polypeptide is Protein BP4A (BP4A) (Brassica napus (Rape)).